Reading from the N-terminus, the 441-residue chain is MRIGLFTDTYFPQVSGVATSIRTLKTELEKQGHAVFIFTTTDKDVNRYEDWQIIRIPSVPFFAFKDRRFAYRGFSKALEIAKQYQLDIIHTQTEFSLGLLGIWIARELKIPVIHTYHTQYEDYVHYIAKGMLIRPSMVKYLVRGFLHDVDGVICPSEIVRDLLSDYKVKVEKRVIPTGIELAKFERPEIKQENLKELRSKLGIQDGEKTLLSLSRISYEKNIQAVLVAFADVLKEEDKVKLVVAGDGPYLNDLKEQAQNLEIQDSVIFTGMIAPSETALYYKAADFFISASTSETQGLTYLESLASGTPVIAHGNPYLNNLISDKMFGALYYGEHDLAGAILEALIATPDMNEHTLSEKLYEISAENFGKRVHEFYLDAIISNNFQKDLAKDDTVSQRIFKTVLYLPQQVVAVPVKGSRRMLKASKTQLISMRDYWKDHEE.

The protein belongs to the glycosyltransferase group 1 family. Glycosyltransferase 4 subfamily. Requires Mg(2+) as cofactor.

It localises to the cell membrane. The enzyme catalyses a 1,2-diacyl-sn-glycerol + UDP-alpha-D-glucose = a 1,2-diacyl-3-O-(alpha-D-glucopyranosyl)-sn-glycerol + UDP + H(+). Activated by the negatively charged lipid phosphatidylglycerol (PG). Glucosyltransferase involved in the biosynthesis of the non-bilayer-prone membrane lipid alpha-monoglucosyldiacylglycerol. This is a major component for maintaining a certain anionic lipid surface charge density, for balancing the bilayer to non-bilayer phase equilibria and for keeping a constant lipid bilayer spontaneous curvature (curvature packing stress). Catalyzes the transfer of a glucosyl residue from UDP-Glc to diacylglycerol (DAG) acceptor to form the corresponding alpha-glucosyl-DAG (1,2-diacyl-3-O-(alpha-D-glucopyranosyl)-sn-glycerol). It can only use UDP-Glc as sugar donor. The sequence is that of Alpha-monoglucosyldiacylglycerol synthase from Streptococcus pneumoniae (strain ATCC BAA-255 / R6).